The following is a 125-amino-acid chain: Thioredoxin H-type (125 aa).

Residues 2–112 enclose the Thioredoxin domain; that stretch reads AEGNVFACHS…LERKVAALAA (111 aa). Residues Cys38 and Cys41 each act as nucleophile in the active site. Cys38 and Cys41 form a disulfide bridge.

Belongs to the thioredoxin family. Plant H-type subfamily.

The protein localises to the cytoplasm. Functionally, participates in various redox reactions through the reversible oxidation of the active center dithiol to a disulfide. The H form is known to activate a number of cytosolic enzymes. This Picea mariana (Black spruce) protein is Thioredoxin H-type (SB09).